A 505-amino-acid chain; its full sequence is Beta-glucosidase 3 (505 aa).

Residues 1-22 form the signal peptide; the sequence is MAAAAAFFCALLFISVQHGVLG. A beta-D-glucoside contacts are provided by Gln-43 and His-143. Catalysis depends on Glu-189, which acts as the Proton donor. The cysteines at positions 208 and 217 are disulfide-linked. An N-linked (GlcNAc...) asparagine glycan is attached at Asn-221. Positions 333 and 405 each coordinate a beta-D-glucoside. The active-site Nucleophile is Glu-405. Asn-415 and Asn-436 each carry an N-linked (GlcNAc...) asparagine glycan. A beta-D-glucoside-binding residues include Trp-450 and Tyr-466.

Belongs to the glycosyl hydrolase 1 family.

The catalysed reaction is Hydrolysis of terminal, non-reducing beta-D-glucosyl residues with release of beta-D-glucose.. In Oryza sativa subsp. japonica (Rice), this protein is Beta-glucosidase 3 (BGLU3).